Here is a 296-residue protein sequence, read N- to C-terminus: 33 kDa chaperonin (296 aa).

Disulfide bonds link cysteine 238-cysteine 240 and cysteine 271-cysteine 274.

The protein belongs to the HSP33 family. In terms of processing, under oxidizing conditions two disulfide bonds are formed involving the reactive cysteines. Under reducing conditions zinc is bound to the reactive cysteines and the protein is inactive.

Its subcellular location is the cytoplasm. Its function is as follows. Redox regulated molecular chaperone. Protects both thermally unfolding and oxidatively damaged proteins from irreversible aggregation. Plays an important role in the bacterial defense system toward oxidative stress. The chain is 33 kDa chaperonin from Clostridium botulinum (strain Loch Maree / Type A3).